The sequence spans 337 residues: Lipoyl synthase (337 aa).

[4Fe-4S] cluster is bound by residues Cys-81, Cys-86, Cys-92, Cys-107, Cys-111, Cys-114, and Ser-323. Residues 93-312 (FSHGTATFMI…EEYGNALGFS (220 aa)) form the Radical SAM core domain.

This sequence belongs to the radical SAM superfamily. Lipoyl synthase family. [4Fe-4S] cluster is required as a cofactor.

The protein localises to the cytoplasm. The enzyme catalyses [[Fe-S] cluster scaffold protein carrying a second [4Fe-4S](2+) cluster] + N(6)-octanoyl-L-lysyl-[protein] + 2 oxidized [2Fe-2S]-[ferredoxin] + 2 S-adenosyl-L-methionine + 4 H(+) = [[Fe-S] cluster scaffold protein] + N(6)-[(R)-dihydrolipoyl]-L-lysyl-[protein] + 4 Fe(3+) + 2 hydrogen sulfide + 2 5'-deoxyadenosine + 2 L-methionine + 2 reduced [2Fe-2S]-[ferredoxin]. It participates in protein modification; protein lipoylation via endogenous pathway; protein N(6)-(lipoyl)lysine from octanoyl-[acyl-carrier-protein]: step 2/2. In terms of biological role, catalyzes the radical-mediated insertion of two sulfur atoms into the C-6 and C-8 positions of the octanoyl moiety bound to the lipoyl domains of lipoate-dependent enzymes, thereby converting the octanoylated domains into lipoylated derivatives. This chain is Lipoyl synthase, found in Xanthomonas campestris pv. campestris (strain 8004).